We begin with the raw amino-acid sequence, 284 residues long: Bifunctional protein FolD (284 aa).

NADP(+) is bound by residues 166–168 (GAS) and I232.

It belongs to the tetrahydrofolate dehydrogenase/cyclohydrolase family. Homodimer.

It carries out the reaction (6R)-5,10-methylene-5,6,7,8-tetrahydrofolate + NADP(+) = (6R)-5,10-methenyltetrahydrofolate + NADPH. It catalyses the reaction (6R)-5,10-methenyltetrahydrofolate + H2O = (6R)-10-formyltetrahydrofolate + H(+). Its pathway is one-carbon metabolism; tetrahydrofolate interconversion. In terms of biological role, catalyzes the oxidation of 5,10-methylenetetrahydrofolate to 5,10-methenyltetrahydrofolate and then the hydrolysis of 5,10-methenyltetrahydrofolate to 10-formyltetrahydrofolate. The protein is Bifunctional protein FolD of Pseudomonas fluorescens (strain ATCC BAA-477 / NRRL B-23932 / Pf-5).